The primary structure comprises 156 residues: Small ribosomal subunit protein uS7 (156 aa).

This sequence belongs to the universal ribosomal protein uS7 family. In terms of assembly, part of the 30S ribosomal subunit. Contacts proteins S9 and S11.

Functionally, one of the primary rRNA binding proteins, it binds directly to 16S rRNA where it nucleates assembly of the head domain of the 30S subunit. Is located at the subunit interface close to the decoding center, probably blocks exit of the E-site tRNA. The sequence is that of Small ribosomal subunit protein uS7 from Synechococcus sp. (strain WH7803).